The following is a 470-amino-acid chain: Protein nucleotidyltransferase YdiU (470 aa).

ATP is bound by residues G86, G88, R89, K109, D121, G122, R172, and R179. D244 (proton acceptor) is an active-site residue. Mg(2+)-binding residues include N245 and D254. D254 contributes to the ATP binding site.

The protein belongs to the SELO family. It depends on Mg(2+) as a cofactor. Requires Mn(2+) as cofactor.

It catalyses the reaction L-seryl-[protein] + ATP = 3-O-(5'-adenylyl)-L-seryl-[protein] + diphosphate. The catalysed reaction is L-threonyl-[protein] + ATP = 3-O-(5'-adenylyl)-L-threonyl-[protein] + diphosphate. The enzyme catalyses L-tyrosyl-[protein] + ATP = O-(5'-adenylyl)-L-tyrosyl-[protein] + diphosphate. It carries out the reaction L-histidyl-[protein] + UTP = N(tele)-(5'-uridylyl)-L-histidyl-[protein] + diphosphate. It catalyses the reaction L-seryl-[protein] + UTP = O-(5'-uridylyl)-L-seryl-[protein] + diphosphate. The catalysed reaction is L-tyrosyl-[protein] + UTP = O-(5'-uridylyl)-L-tyrosyl-[protein] + diphosphate. Its function is as follows. Nucleotidyltransferase involved in the post-translational modification of proteins. It can catalyze the addition of adenosine monophosphate (AMP) or uridine monophosphate (UMP) to a protein, resulting in modifications known as AMPylation and UMPylation. The polypeptide is Protein nucleotidyltransferase YdiU (Roseobacter denitrificans (strain ATCC 33942 / OCh 114) (Erythrobacter sp. (strain OCh 114))).